The following is a 173-amino-acid chain: Photosystem I assembly protein Ycf3 (173 aa).

3 TPR repeats span residues 35 to 68 (AYIY…EENK), 72 to 105 (GETL…NPKQ), and 120 to 153 (GRYA…YPGG).

It belongs to the Ycf3 family.

It is found in the cellular thylakoid membrane. Functionally, essential for the assembly of the photosystem I (PSI) complex. May act as a chaperone-like factor to guide the assembly of the PSI subunits. This Prochlorococcus marinus (strain MIT 9215) protein is Photosystem I assembly protein Ycf3.